The following is a 938-amino-acid chain: MSDYKNTLNLPETGFPMRGDLAKREPDMLKRWYEQDLYGIIRTAKKGKKTFILHDGPPYANGNIHIGHSVNKILKDIIVKAKGMSGYDSPYIPGWDCHGLPIELKVEQLIGKPGEKVSAAEFRAACRKYAAEQVEGQKKDFIRLGVLGDWDHPYLTMDFKTEANIIRALSKIIDNAHLHKGAKPVHWCTDCGSSLAEAEVEYYDKTSPSIDVRFNAVDVATVSAKFGAANANGPISLVIWTTTPWTLPANRAISLNAEYNYQLVQVEGECLILAEDLVESVMKRAGIAEWTVLGSCKGSDLELLRFNHPFMGFDVPAILGDHVTLDAGTGAVHTAPGHGPDDFVIGQKYGLEVANPVGPNGCYLAGTYPTLDGLFVFKANDVIVELLREKGALLKVEKLVHSYPCCWRHKTPIIFRATPQWFISMDQKGLRKQSLEEIKGVQWIPDWGQARIETMVANRPDWCISRQRTWGVPMSLFVHKETEALHPRSTELMEEVAKRVEQDGIQAWWDLDPAEILGADAADYVKVPDTLDVWFDSGSTHSSVVDARPEFGGHSPDMYLEGSDQHRGWFMSSLMIATAMKGKAPYRQVLTHGFTVDGQGRKMSKSIGNTISPQDVMNKLGGDILRLWVASTDYTGEIAVSDEILKRSADSYRRIRNTARFLLANLNGFDPALHQVKPEEMVVVDRWAVGRAQAAQAEIMEAYENYDFHLVVQRLMQFCSVEMGSFYLDIIKDRQYTAKGDSVARRSCQTALFHIAEALVRWMAPIMSFTADEIWNEMPGERPQYVFTEEWYDGLFGLAGDESMNDTFWAELLKVRGEVNKVLEQARSDKRIGGSLEAAVTLFATPELAARLNSLQDELRFVLLTSAAKVADYADAGDDALQSELISGLKITFNKADGEKCPRCWHYTQDIGLVAEHAELCGRCVTNVAGDGEERKYA.

Positions 58–68 match the 'HIGH' region motif; that stretch reads PYANGNIHIGH. An L-isoleucyl-5'-AMP-binding site is contributed by glutamate 561. The 'KMSKS' region signature appears at 602–606; that stretch reads KMSKS. Lysine 605 contacts ATP. Cysteine 901, cysteine 904, cysteine 921, and cysteine 924 together coordinate Zn(2+).

Belongs to the class-I aminoacyl-tRNA synthetase family. IleS type 1 subfamily. Monomer. It depends on Zn(2+) as a cofactor.

The protein resides in the cytoplasm. It catalyses the reaction tRNA(Ile) + L-isoleucine + ATP = L-isoleucyl-tRNA(Ile) + AMP + diphosphate. Catalyzes the attachment of isoleucine to tRNA(Ile). As IleRS can inadvertently accommodate and process structurally similar amino acids such as valine, to avoid such errors it has two additional distinct tRNA(Ile)-dependent editing activities. One activity is designated as 'pretransfer' editing and involves the hydrolysis of activated Val-AMP. The other activity is designated 'posttransfer' editing and involves deacylation of mischarged Val-tRNA(Ile). This is Isoleucine--tRNA ligase from Yersinia enterocolitica serotype O:8 / biotype 1B (strain NCTC 13174 / 8081).